A 453-amino-acid chain; its full sequence is MTRPVHACPLVSRKAPPLSGKVHVPGDKSISHRALMLSALAVGESFVEGLLEGEDVLATAEAMRSMGADIRKDEKGCWHIHGVGVGSLLQPQNALDMGNSGTSTRLLMGVVASHPITATFIGDASLSKRPMGRISTPLSLMGARFSAAEGNRLPMTVTGLYPAIPIEYRLPVASAQVKSAILLAGLNTPGITRVIEPVPTRDHSERMLKGYGANLSVEENDGVRIISIHGEAELKPQHIIVPGDPSSAAFLVVAGLIVPGSDLIVENVGLNPTRSGLYTMLKAMGGQIEYLNPREVGGEPVADLSVKYSHLKAIDVPPSIVPSMIDEFPILFIAAAMAEGKSTLQGLAELRVKESDRIAVMAEGLKALGVSLEEKEDGLIIEGSAGEGLGQKGKMVSIAAHLDHRIAMSFAVAGLVSEGGVTIDDRRPIMTSFPVFGQLFKELGAEFEMGLVK.

Positions 28, 29, and 33 each coordinate 3-phosphoshikimate. A phosphoenolpyruvate-binding site is contributed by lysine 28. Phosphoenolpyruvate-binding residues include glycine 101 and arginine 129. Serine 174, glutamine 176, aspartate 326, and lysine 353 together coordinate 3-phosphoshikimate. Glutamine 176 is a phosphoenolpyruvate binding site. Catalysis depends on aspartate 326, which acts as the Proton acceptor. Phosphoenolpyruvate-binding residues include arginine 357 and arginine 405.

Belongs to the EPSP synthase family. As to quaternary structure, monomer.

It localises to the cytoplasm. The enzyme catalyses 3-phosphoshikimate + phosphoenolpyruvate = 5-O-(1-carboxyvinyl)-3-phosphoshikimate + phosphate. It participates in metabolic intermediate biosynthesis; chorismate biosynthesis; chorismate from D-erythrose 4-phosphate and phosphoenolpyruvate: step 6/7. Functionally, catalyzes the transfer of the enolpyruvyl moiety of phosphoenolpyruvate (PEP) to the 5-hydroxyl of shikimate-3-phosphate (S3P) to produce enolpyruvyl shikimate-3-phosphate and inorganic phosphate. In Zymomonas mobilis subsp. mobilis (strain ATCC 31821 / ZM4 / CP4), this protein is 3-phosphoshikimate 1-carboxyvinyltransferase.